A 399-amino-acid polypeptide reads, in one-letter code: Elongation factor Tu (399 aa).

The tr-type G domain occupies 10–209 (KPHVNIGTIG…DVDEYIPTPV (200 aa)). The tract at residues 19–26 (GHVDHGKT) is G1. A GTP-binding site is contributed by 19-26 (GHVDHGKT). Residue Thr-26 participates in Mg(2+) binding. Residues 62 to 66 (GITIN) form a G2 region. Residues 83–86 (DCPG) are G3. GTP contacts are provided by residues 83–87 (DCPGH) and 138–141 (NKCD). Residues 138–141 (NKCD) form a G4 region. The segment at 175-177 (SAY) is G5.

This sequence belongs to the TRAFAC class translation factor GTPase superfamily. Classic translation factor GTPase family. EF-Tu/EF-1A subfamily. In terms of assembly, monomer.

The protein resides in the cytoplasm. The enzyme catalyses GTP + H2O = GDP + phosphate + H(+). Its function is as follows. GTP hydrolase that promotes the GTP-dependent binding of aminoacyl-tRNA to the A-site of ribosomes during protein biosynthesis. This Bifidobacterium animalis subsp. lactis (strain AD011) protein is Elongation factor Tu.